A 140-amino-acid polypeptide reads, in one-letter code: Large ribosomal subunit protein uL16 (140 aa).

It belongs to the universal ribosomal protein uL16 family. In terms of assembly, part of the 50S ribosomal subunit.

Functionally, binds 23S rRNA and is also seen to make contacts with the A and possibly P site tRNAs. The protein is Large ribosomal subunit protein uL16 of Malacoplasma penetrans (strain HF-2) (Mycoplasma penetrans).